Consider the following 348-residue polypeptide: Phosphoribosylformylglycinamidine cyclo-ligase (348 aa).

Belongs to the AIR synthase family.

It localises to the cytoplasm. The enzyme catalyses 2-formamido-N(1)-(5-O-phospho-beta-D-ribosyl)acetamidine + ATP = 5-amino-1-(5-phospho-beta-D-ribosyl)imidazole + ADP + phosphate + H(+). The protein operates within purine metabolism; IMP biosynthesis via de novo pathway; 5-amino-1-(5-phospho-D-ribosyl)imidazole from N(2)-formyl-N(1)-(5-phospho-D-ribosyl)glycinamide: step 2/2. The polypeptide is Phosphoribosylformylglycinamidine cyclo-ligase (Geobacter sp. (strain M21)).